The following is a 161-amino-acid chain: Cyclic pyranopterin monophosphate synthase (161 aa).

Substrate-binding positions include 75–77 (LCH) and 113–114 (ME). Residue D128 is part of the active site.

This sequence belongs to the MoaC family. As to quaternary structure, homohexamer; trimer of dimers.

The enzyme catalyses (8S)-3',8-cyclo-7,8-dihydroguanosine 5'-triphosphate = cyclic pyranopterin phosphate + diphosphate. Its pathway is cofactor biosynthesis; molybdopterin biosynthesis. In terms of biological role, catalyzes the conversion of (8S)-3',8-cyclo-7,8-dihydroguanosine 5'-triphosphate to cyclic pyranopterin monophosphate (cPMP). In Salmonella dublin (strain CT_02021853), this protein is Cyclic pyranopterin monophosphate synthase.